Reading from the N-terminus, the 614-residue chain is 4-hydroxy-3-methylbut-2-en-1-yl diphosphate synthase (flavodoxin) (614 aa).

[4Fe-4S] cluster is bound by residues Cys522, Cys525, Cys556, and Glu563.

It belongs to the IspG family. [4Fe-4S] cluster is required as a cofactor.

The catalysed reaction is (2E)-4-hydroxy-3-methylbut-2-enyl diphosphate + oxidized [flavodoxin] + H2O + 2 H(+) = 2-C-methyl-D-erythritol 2,4-cyclic diphosphate + reduced [flavodoxin]. Its pathway is isoprenoid biosynthesis; isopentenyl diphosphate biosynthesis via DXP pathway; isopentenyl diphosphate from 1-deoxy-D-xylulose 5-phosphate: step 5/6. Its function is as follows. Converts 2C-methyl-D-erythritol 2,4-cyclodiphosphate (ME-2,4cPP) into 1-hydroxy-2-methyl-2-(E)-butenyl 4-diphosphate. The protein is 4-hydroxy-3-methylbut-2-en-1-yl diphosphate synthase (flavodoxin) of Phocaeicola vulgatus (strain ATCC 8482 / DSM 1447 / JCM 5826 / CCUG 4940 / NBRC 14291 / NCTC 11154) (Bacteroides vulgatus).